The following is a 191-amino-acid chain: Guanylate kinase (191 aa).

The 179-residue stretch at 4–182 (GRLIVVSGPS…AREEMIEIMR (179 aa)) folds into the Guanylate kinase-like domain. 11 to 18 (GPSGAGKS) is a binding site for ATP.

It belongs to the guanylate kinase family.

The protein localises to the cytoplasm. The catalysed reaction is GMP + ATP = GDP + ADP. Functionally, essential for recycling GMP and indirectly, cGMP. In Rubrobacter xylanophilus (strain DSM 9941 / JCM 11954 / NBRC 16129 / PRD-1), this protein is Guanylate kinase.